The sequence spans 210 residues: Cytochrome c biogenesis ATP-binding export protein CcmA (210 aa).

The ABC transporter domain occupies Leu3–Leu205. Gly37–Thr44 provides a ligand contact to ATP.

It belongs to the ABC transporter superfamily. CcmA exporter (TC 3.A.1.107) family. As to quaternary structure, the complex is composed of two ATP-binding proteins (CcmA) and two transmembrane proteins (CcmB).

Its subcellular location is the cell inner membrane. It catalyses the reaction heme b(in) + ATP + H2O = heme b(out) + ADP + phosphate + H(+). Functionally, part of the ABC transporter complex CcmAB involved in the biogenesis of c-type cytochromes; once thought to export heme, this seems not to be the case, but its exact role is uncertain. Responsible for energy coupling to the transport system. This Pseudomonas putida (strain ATCC 47054 / DSM 6125 / CFBP 8728 / NCIMB 11950 / KT2440) protein is Cytochrome c biogenesis ATP-binding export protein CcmA.